Reading from the N-terminus, the 309-residue chain is MARCERLRGAALRDVLGQAQGVLFDCDGVLWNGERIVPGAPELLQRLAQAGKATLFVSNNSRRARPELALRFARLGFTGLRAEELFSSAVCAARLLRQRLPGPPDAPGAVFVLGGEGLRAELRAAGLRLAGDPGDDPRVRAVLVGYDEHFSFAKLTEACAHLRDPDCLLVATDRDPWHPLTDGSRTPGTGSLAAAVETASGRQALVVGKPSPYMFQCITEDFSVDPARMLMVGDRLETDILFGHRCGMTTVLTLTGVSSLEEAQAYLAAGQHDLVPHYYVESIADLMEGLGGLSPPPQFPDPVDGGYRP.

The active-site Nucleophile is the Asp-25. The Mg(2+) site is built by Asp-25 and Asp-27. Asp-27 acts as the Proton donor in catalysis. Residues Ser-58–Asn-60, His-178, and Lys-209 each bind substrate. Asp-234 provides a ligand contact to Mg(2+).

Belongs to the HAD-like hydrolase superfamily. Homodimer. Requires Mg(2+) as cofactor.

It localises to the cytoplasm. Its subcellular location is the cytosol. The protein resides in the cytoskeleton. It is found in the cell projection. The protein localises to the ruffle membrane. It localises to the lamellipodium membrane. Its subcellular location is the cell membrane. It catalyses the reaction pyridoxal 5'-phosphate + H2O = pyridoxal + phosphate. It carries out the reaction pyridoxine 5'-phosphate + H2O = pyridoxine + phosphate. The enzyme catalyses pyridoxamine + phosphate = pyridoxamine 5'-phosphate + H2O. The catalysed reaction is O-phospho-L-seryl-[protein] + H2O = L-seryl-[protein] + phosphate. Functions as a pyridoxal phosphate (PLP) phosphatase, which also catalyzes the dephosphorylation of pyridoxine 5'-phosphate (PNP) and pyridoxamine 5'-phosphate (PMP), with order of substrate preference PLP &gt; PNP &gt; PMP and therefore plays a role in vitamin B6 metabolism. Also functions as a protein serine phosphatase that specifically dephosphorylates 'Ser-3' in proteins of the actin-depolymerizing factor (ADF)/cofilin family like CFL1 and DSTN. Thereby, regulates cofilin-dependent actin cytoskeleton reorganization, being required for normal progress through mitosis and normal cytokinesis. Does not dephosphorylate phosphothreonines in LIMK1. Does not dephosphorylate peptides containing phosphotyrosine. The chain is Chronophin from Rattus norvegicus (Rat).